The sequence spans 109 residues: Nucleoid-associated protein Spea_1509 (109 aa).

Residues 87-109 form a disordered region; sequence NQKEKMAEVTGGMQLPPGMKMPF.

This sequence belongs to the YbaB/EbfC family. In terms of assembly, homodimer.

The protein localises to the cytoplasm. It is found in the nucleoid. Functionally, binds to DNA and alters its conformation. May be involved in regulation of gene expression, nucleoid organization and DNA protection. This Shewanella pealeana (strain ATCC 700345 / ANG-SQ1) protein is Nucleoid-associated protein Spea_1509.